The primary structure comprises 405 residues: Glucose-1-phosphate adenylyltransferase (405 aa).

Alpha-D-glucose 1-phosphate contacts are provided by residues Tyr-96, Gly-161, 176 to 177, and Ser-194; that span reads EK.

Belongs to the bacterial/plant glucose-1-phosphate adenylyltransferase family. Homotetramer.

The catalysed reaction is alpha-D-glucose 1-phosphate + ATP + H(+) = ADP-alpha-D-glucose + diphosphate. It participates in glycan biosynthesis; glycogen biosynthesis. Functionally, involved in the biosynthesis of ADP-glucose, a building block required for the elongation reactions to produce glycogen. Catalyzes the reaction between ATP and alpha-D-glucose 1-phosphate (G1P) to produce pyrophosphate and ADP-Glc. This chain is Glucose-1-phosphate adenylyltransferase, found in Photobacterium profundum (strain SS9).